A 39-amino-acid polypeptide reads, in one-letter code: Sarcotoxin-1C (39 aa).

Arg39 bears the Arginine amide mark.

This sequence belongs to the cecropin family.

The protein localises to the secreted. Its function is as follows. Sarcotoxins, which are potent bactericidal proteins, are produced in response to injury. They are cytotoxic to both Gram-positive and Gram-negative bacteria. The chain is Sarcotoxin-1C from Sarcophaga peregrina (Flesh fly).